Here is a 736-residue protein sequence, read N- to C-terminus: DEAD-box ATP-dependent RNA helicase 21 (736 aa).

Residues 14-38 adopt a coiled-coil conformation; it reads LTREEREKLALERRQAAVTDQRRSA. Positions 25-38 are enriched in basic and acidic residues; that stretch reads ERRQAAVTDQRRSA. Disordered stretches follow at residues 25 to 178 and 231 to 263; these read ERRQ…PKKR and KVAA…DKKE. Over residues 46–58 the composition is skewed to pro residues; it reads PRPPPPPPPPLSN. 2 stretches are compositionally biased toward basic and acidic residues: residues 64–166 and 231–252; these read SSSH…DAIK and KVAA…GLDD. The stretch at 137–167 forms a coiled coil; sequence DRDRERGDREKDRLEKMAEREREKELDAIKE. A Q motif motif is present at residues 315–343; the sequence is RKWSESKLGTELLRAVEKAGYKEPSPIQM. Residues 346–541 enclose the Helicase ATP-binding domain; sequence IPLGLQQRDV…RKYLRNPVVV (196 aa). 359–366 lines the ATP pocket; the sequence is AETGSGKT. The DEAD box motif lies at 472–475; it reads DEAD. Positions 568–712 constitute a Helicase C-terminal domain; that stretch reads RLQKILTDLG…PVPPELARHE (145 aa). The interval 704–736 is disordered; it reads VPPELARHEASKFKPGSVPDRPPRRNDTVYATH.

Belongs to the DEAD box helicase family. DDX23/PRP28 subfamily.

It is found in the cytoplasm. The protein localises to the nucleus. The enzyme catalyses ATP + H2O = ADP + phosphate + H(+). Functionally, ATP-dependent RNA helicase involved in mRNA splicing. May destabilize the U1/5'-splice site duplex to permit an effective competition for the 5'-splice site by the U6 snRNA, resulting in the switch between U1 and U6 at the 5'-splice site. May also act to unwind the U4/U6 base-pairing interaction in the U4/U6/U5 snRNP, facilitating the first covalent step of splicing. The polypeptide is DEAD-box ATP-dependent RNA helicase 21 (Oryza sativa subsp. japonica (Rice)).